The sequence spans 202 residues: Transcription factor MUTE (202 aa).

One can recognise a bHLH domain in the interval Met-1–Leu-49.

As to quaternary structure, homodimer. Leaf epidermis and flowers.

It localises to the nucleus. Its function is as follows. Transcription factor. Together with FMA and SPCH, regulates the stomata formation. Required for the differentiation of stomatal guard cells, by promoting successive asymmetric cell divisions and the formation of guard mother cells. Promotes the conversion of the leaf epidermis into stomata. This is Transcription factor MUTE (MUTE) from Arabidopsis thaliana (Mouse-ear cress).